The sequence spans 123 residues: Fluoride-specific ion channel FluC (123 aa).

4 helical membrane-spanning segments follow: residues 5 to 25 (IIAL…YISG), 35 to 55 (IGTL…YGLL), 67 to 87 (IFLG…SYET), and 100 to 120 (FANI…GFIL). Na(+) contacts are provided by glycine 75 and serine 78.

The protein belongs to the fluoride channel Fluc/FEX (TC 1.A.43) family.

It is found in the cell membrane. The enzyme catalyses fluoride(in) = fluoride(out). With respect to regulation, na(+) is not transported, but it plays an essential structural role and its presence is essential for fluoride channel function. Functionally, fluoride-specific ion channel. Important for reducing fluoride concentration in the cell, thus reducing its toxicity. The protein is Fluoride-specific ion channel FluC of Pyrococcus horikoshii (strain ATCC 700860 / DSM 12428 / JCM 9974 / NBRC 100139 / OT-3).